Reading from the N-terminus, the 817-residue chain is Fibroblast growth factor receptor 2 (817 aa).

The signal sequence occupies residues 1–22 (MFARGWLLGALLLMTLATVSVA). The Extracellular portion of the chain corresponds to 23 to 377 (RPSLKIDLVN…ETDYPPDYVE (355 aa)). Ig-like C2-type domains lie at 26-126 (LKID…VNVT), 159-247 (PEKM…YTLD), and 256-358 (PILQ…AWLT). N-linked (GlcNAc...) asparagine glycans are attached at residues asparagine 32, asparagine 84, and asparagine 124. Cysteine 63 and cysteine 108 are disulfide-bonded. The interval 161–178 (KMEKKLHAVPAANTVKFR) is heparin-binding. The cysteines at positions 179 and 231 are disulfide-linked. 5 N-linked (GlcNAc...) asparagine glycosylation sites follow: asparagine 228, asparagine 265, asparagine 297, asparagine 318, and asparagine 331. Cysteine 278 and cysteine 342 are joined by a disulfide. Residues 378–398 (IAIYCIGVFLIACMVVIVVVC) traverse the membrane as a helical segment. Residues 399 to 817 (RMRTSAKKPD…YQHINGGIKT (419 aa)) lie on the Cytoplasmic side of the membrane. Residues 429 to 465 (TVSSDSSSSMSSSTPLVRITTRRSSAHDDPIPEYDLP) form a disordered region. Positions 431 to 441 (SSDSSSSMSSS) are enriched in low complexity. Tyrosine 462 carries the phosphotyrosine; by autocatalysis modification. The 290-residue stretch at 477-766 (LTLGKPLGEG…LTLATNEEYL (290 aa)) folds into the Protein kinase domain. Residues 483–491 (LGEGCFGQV), lysine 513, 561–563 (EYA), and asparagine 567 each bind ATP. At tyrosine 582 the chain carries Phosphotyrosine; by autocatalysis. Aspartate 622 serves as the catalytic Proton acceptor. Phosphotyrosine; by autocatalysis is present on residues tyrosine 652, tyrosine 653, and tyrosine 765.

The protein belongs to the protein kinase superfamily. Tyr protein kinase family. Fibroblast growth factor receptor subfamily. As to quaternary structure, monomer. Homodimer after ligand binding. In terms of processing, autophosphorylated. Binding of FGF family members together with heparan sulfate proteoglycan or heparin promotes receptor dimerization and autophosphorylation on tyrosine residues. Autophosphorylation occurs in trans between the two FGFR molecules present in the dimer. N-glycosylated in the endoplasmic reticulum. The N-glycan chains undergo further maturation to an Endo H-resistant form in the Golgi apparatus. Post-translationally, ubiquitinated. FGFR2 is rapidly ubiquitinated after autophosphorylation, leading to internalization and degradation. Subject to degradation both in lysosomes and by the proteasome.

The protein localises to the cell membrane. Its subcellular location is the golgi apparatus. It is found in the cytoplasmic vesicle. The enzyme catalyses L-tyrosyl-[protein] + ATP = O-phospho-L-tyrosyl-[protein] + ADP + H(+). Present in an inactive conformation in the absence of bound ligand. Ligand binding leads to dimerization and activation by autophosphorylation on tyrosine residues. Functionally, tyrosine-protein kinase that acts as a cell-surface receptor for fibroblast growth factors and plays an essential role in the regulation of cell proliferation, differentiation, migration and apoptosis, and in the regulation of embryonic development. Required for normal embryonic patterning, limb bud development, lung morphogenesis, osteogenesis and skin development. Plays an essential role in the regulation of osteoblast differentiation, proliferation and apoptosis, and is required for normal skeleton development. Promotes cell proliferation in keratinocytes and immature osteoblasts, but promotes apoptosis in differentiated osteoblasts. Phosphorylates PLCG1, FRS2 and PAK4. Ligand binding leads to the activation of several signaling cascades. Activation of PLCG1 leads to the production of the cellular signaling molecules diacylglycerol and inositol 1,4,5-trisphosphate. Phosphorylation of FRS2 triggers recruitment of GRB2, GAB1, PIK3R1 and SOS1, and mediates activation of RAS, MAPK1/ERK2, MAPK3/ERK1 and the MAP kinase signaling pathway, as well as of the AKT1 signaling pathway. FGFR2 signaling is down-regulated by ubiquitination, internalization and degradation. Mutations that lead to constitutive kinase activation or impair normal FGFR2 maturation, internalization and degradation lead to aberrant signaling. Over-expressed FGFR2 promotes activation of STAT1. In Danio rerio (Zebrafish), this protein is Fibroblast growth factor receptor 2 (fgfr2).